The following is a 448-amino-acid chain: Bifunctional F420 biosynthesis protein FbiB (448 aa).

A coenzyme F420:L-glutamate ligase region spans residues 1-244; that stretch reads MTGPEHGSAS…PGANDLFWLG (244 aa). GTP-binding positions include 20 to 23, serine 50, and lysine 55; that span reads LPEF. Aspartate 109 serves as a coordination point for a divalent metal cation. Residue asparagine 112 participates in GTP binding. A divalent metal cation contacts are provided by aspartate 150 and threonine 151. The interval 245 to 448 is dehydro-coenzyme F420-0 reductase; sequence TAEALELGRQ…VPAADLLILK (204 aa). FMN is bound by residues 260-264 and alanine 288; that span reads RRSVR. A coenzyme F420-(gamma-Glu)n-binding site is contributed by aspartate 320. FMN is bound by residues glycine 399 and arginine 436.

This sequence in the N-terminal section; belongs to the CofE family. Requires Mg(2+) as cofactor. Mn(2+) serves as cofactor. It depends on K(+) as a cofactor.

The enzyme catalyses oxidized coenzyme F420-0 + GTP + L-glutamate = oxidized coenzyme F420-1 + GDP + phosphate + H(+). It catalyses the reaction oxidized coenzyme F420-1 + GTP + L-glutamate = oxidized coenzyme F420-2 + GDP + phosphate + H(+). The catalysed reaction is oxidized coenzyme F420-(gamma-L-Glu)(n) + GTP + L-glutamate = oxidized coenzyme F420-(gamma-L-Glu)(n+1) + GDP + phosphate + H(+). It carries out the reaction oxidized coenzyme F420-0 + FMN + H(+) = dehydro coenzyme F420-0 + FMNH2. Its pathway is cofactor biosynthesis; coenzyme F420 biosynthesis. Functionally, bifunctional enzyme that catalyzes the GTP-dependent successive addition of multiple gamma-linked L-glutamates to the L-lactyl phosphodiester of 7,8-didemethyl-8-hydroxy-5-deazariboflavin (F420-0) to form polyglutamated F420 derivatives, and the FMNH2-dependent reduction of dehydro-F420-0 to form F420-0. This Mycobacterium tuberculosis (strain ATCC 25177 / H37Ra) protein is Bifunctional F420 biosynthesis protein FbiB.